We begin with the raw amino-acid sequence, 291 residues long: 4-diphosphocytidyl-2-C-methyl-D-erythritol kinase (291 aa).

Residue Lys-21 is part of the active site. 104–114 contributes to the ATP binding site; it reads PMGGGLGGGSS. The active site involves Asp-146.

Belongs to the GHMP kinase family. IspE subfamily.

The enzyme catalyses 4-CDP-2-C-methyl-D-erythritol + ATP = 4-CDP-2-C-methyl-D-erythritol 2-phosphate + ADP + H(+). The protein operates within isoprenoid biosynthesis; isopentenyl diphosphate biosynthesis via DXP pathway; isopentenyl diphosphate from 1-deoxy-D-xylulose 5-phosphate: step 3/6. Functionally, catalyzes the phosphorylation of the position 2 hydroxy group of 4-diphosphocytidyl-2C-methyl-D-erythritol. The sequence is that of 4-diphosphocytidyl-2-C-methyl-D-erythritol kinase from Methylococcus capsulatus (strain ATCC 33009 / NCIMB 11132 / Bath).